A 347-amino-acid polypeptide reads, in one-letter code: Transcription factor EC (347 aa).

Residues 1-119 (MTLDHQIINP…GLTSASCPSS (119 aa)) form a necessary for transcriptional transactivation region. Residues 139-192 (QKKDNHNLIERRRRYNINYRIKELGTLIPKSNDPDMRWNKGTILKASVEYIKWL) enclose the bHLH domain. Residues 271-347 (PSPEFCDQAI…SFSSDDGDEL (77 aa)) are necessary for transcriptional transactivation. The segment at 319 to 347 (DPLLSATSPAVSKESSRRSSFSSDDGDEL) is disordered. Positions 326 to 341 (SPAVSKESSRRSSFSS) are enriched in low complexity.

The protein belongs to the MiT/TFE family. As to quaternary structure, homodimer. Forms heterodimers with MITF and TFE3. Interacts with MITF.

The protein resides in the nucleus. Transcriptional regulator that acts as a repressor or an activator. Acts as a transcriptional repressor on minimal promoter containing element F (that includes an E-box sequence). Binds to element F in an E-box sequence-specific manner. Acts as a transcriptional transactivator on the proximal promoter region of the tartrate-resistant acid phosphatase (TRAP) E-box containing promoter. Collaborates with MITF in target gene activation. Acts as a transcriptional repressor on minimal promoter containing mu E3 enhancer sequence. Binds to mu E3 DNA sequence of the immunoglobulin heavy-chain gene enhancer. Binds DNA in a homo- or heterodimeric form. The protein is Transcription factor EC (TFEC) of Pan troglodytes (Chimpanzee).